The sequence spans 351 residues: High-affinity nickel transport protein (351 aa).

Over 1–19 the chain is Cytoplasmic; that stretch reads MFQLLAGVRMNSTGRPRAK. A helical transmembrane segment spans residues 20 to 40; it reads IILLYALLIAFNIGAWLCALA. Residues 41–51 are Periplasmic-facing; it reads AFRDHPVLLGT. The chain crosses the membrane as a helical span at residues 52 to 72; the sequence is ALLAYGLGLRHAVDADHLAAI. Residues 73-94 are Cytoplasmic-facing; sequence DNVTRKLMQDGRRPITAGLWFS. The helical transmembrane segment at 95–115 threads the bilayer; it reads LGHSSVVVLASVLIAVMATTL. Over 116–128 the chain is Periplasmic; sequence QERLDAFHEVGSV. A helical transmembrane segment spans residues 129–149; it reads IGTLASALFLFAIAAINLVIL. Over 150–199 the chain is Cytoplasmic; sequence RSAYRAFRRVRRGGIYVEEDFDLLFGNRGFLARIFRPLFRFITRSWHMYP. A helical transmembrane segment spans residues 200 to 220; that stretch reads LGMLFALGFDTATEVALLGIS. At 221 to 243 the chain is on the periplasmic side; that stretch reads TMEASRGVPIWSILVFPALFTAG. The chain crosses the membrane as a helical span at residues 244-264; it reads MALIDTIDSILMCGAYAWAYA. Topologically, residues 265-269 are cytoplasmic; the sequence is KPVRK. Residues 270–290 traverse the membrane as a helical segment; it reads LYYNMTITFVSAIVALIVGGI. At 291 to 316 the chain is on the periplasmic side; it reads ETLGLLADKFMLKGVFWNAVGALNEN. The chain crosses the membrane as a helical span at residues 317–337; the sequence is FCQLGFVIIGIFTVCWVVSIV. The Cytoplasmic segment spans residues 338–351; it reads VYRLRRYDDSEVRA.

The protein belongs to the NiCoT transporter (TC 2.A.52) family.

The protein localises to the cell inner membrane. In terms of biological role, high-affinity nickel transporter responsible for nickel uptake. Necessary for high levels of activity of hydrogenase and urease. Does not transport cobalt. In Cupriavidus necator (strain ATCC 17699 / DSM 428 / KCTC 22496 / NCIMB 10442 / H16 / Stanier 337) (Ralstonia eutropha), this protein is High-affinity nickel transport protein (hoxN).